Consider the following 100-residue polypeptide: NADH-ubiquinone oxidoreductase chain 4L (100 aa).

3 helical membrane passes run 3-23, 28-48, and 64-84; these read ILNH…GIIL, IIII…NFIY, and LILT…IVFF.

The protein belongs to the complex I subunit 4L family.

The protein resides in the mitochondrion membrane. The catalysed reaction is a ubiquinone + NADH + 5 H(+)(in) = a ubiquinol + NAD(+) + 4 H(+)(out). Functionally, core subunit of the mitochondrial membrane respiratory chain NADH dehydrogenase (Complex I) that is believed to belong to the minimal assembly required for catalysis. Complex I functions in the transfer of electrons from NADH to the respiratory chain. The immediate electron acceptor for the enzyme is believed to be ubiquinone. The polypeptide is NADH-ubiquinone oxidoreductase chain 4L (ND4L) (Phytophthora infestans (Potato late blight agent)).